Reading from the N-terminus, the 360-residue chain is MLVYLAEYLTRFHTGFNVFSYVTFRAILGLLTALVFSLWFGPKLIERLQLLQIGQVVRNDGPESHFSKRGTPTMGGLLILAAIFISVLLWGDLGSRYVWVMLFVLGSFGLIGFIDDYRKVVRKDTKGLIARWKYILQSLAALLIAFFLYATAANPGETQLVVPFFKDVMPQLGAVFIVLAYFTIVGASNAVNLTDGLDGLAIMPTVMVAAAFALIAYLSGHAQFANYLHIPHLPGSGELVIVCTAIVGAGLGFLWFNTYPAQVFMGDVGSLSLGAALGTIAVLVRQEILLVIMGGVFVMETLSVILQVGSYKLRGQRIFRMAPIHHHYELKGWPEPRVIVRFWIISIFLVLLGLATLKLR.

Helical transmembrane passes span 26–46, 74–94, 97–117, 134–154, 168–188, 199–219, 236–256, 263–283, 288–308, and 338–358; these read AILG…KLIE, MGGL…GDLG, YVWV…IDDY, YILQ…TAAN, VMPQ…VGAS, GLAI…AYLS, SGEL…FLWF, VFMG…IAVL, ILLV…ILQV, and VIVR…ATLK.

Belongs to the glycosyltransferase 4 family. MraY subfamily. The cofactor is Mg(2+).

It localises to the cell inner membrane. The catalysed reaction is UDP-N-acetyl-alpha-D-muramoyl-L-alanyl-gamma-D-glutamyl-meso-2,6-diaminopimeloyl-D-alanyl-D-alanine + di-trans,octa-cis-undecaprenyl phosphate = di-trans,octa-cis-undecaprenyl diphospho-N-acetyl-alpha-D-muramoyl-L-alanyl-D-glutamyl-meso-2,6-diaminopimeloyl-D-alanyl-D-alanine + UMP. It functions in the pathway cell wall biogenesis; peptidoglycan biosynthesis. In terms of biological role, catalyzes the initial step of the lipid cycle reactions in the biosynthesis of the cell wall peptidoglycan: transfers peptidoglycan precursor phospho-MurNAc-pentapeptide from UDP-MurNAc-pentapeptide onto the lipid carrier undecaprenyl phosphate, yielding undecaprenyl-pyrophosphoryl-MurNAc-pentapeptide, known as lipid I. This Shewanella baltica (strain OS185) protein is Phospho-N-acetylmuramoyl-pentapeptide-transferase.